The sequence spans 261 residues: MTLGKNKRISKGGKRGKKKTQETMSRKEWYDVVAPKNFEVRQFGKTICNKTQGTKIAADYLRGRVYESNLADLNKTQGDDDAYRKVKFVVQEVQGRNLLTQFHSMEMTSDRVYFLLRKWCTTIEAAVETKTADGYTLRLFVIAFTKKQSNQLSKNCYAKTRLVKWVRHRITNLIRQRLSKVNINEAVTLLTRNILRDRLAKRCNPIVPLRDLRIRKVKVVRTPRFDAQALLNAHGEIPASAEGEARVVEEAQEAPAAEATA.

Over residues 1 to 18 (MTLGKNKRISKGGKRGKK) the composition is skewed to basic residues. A disordered region spans residues 1–23 (MTLGKNKRISKGGKRGKKKTQET).

Belongs to the eukaryotic ribosomal protein eS1 family. Component of the small ribosomal subunit. Mature ribosomes consist of a small (40S) and a large (60S) subunit. The 40S subunit contains about 33 different proteins and 1 molecule of RNA (18S). The 60S subunit contains about 49 different proteins and 3 molecules of RNA (25S, 5.8S and 5S).

Its subcellular location is the cytoplasm. The polypeptide is Small ribosomal subunit protein eS1A (Trypanosoma cruzi (strain CL Brener)).